A 176-amino-acid chain; its full sequence is Inner membrane-spanning protein YciB (176 aa).

The next 6 membrane-spanning stretches (helical) occupy residues 3–23 (FLFDLFPIILFFVAFKVWGIF), 24–44 (TATAVAIVATLAQVAWVAFRH), 49–69 (TMLWVSLGVIVVFGGATLVLH), 72–92 (KFIQWKPTVLYWLFAIGLLAA), 121–141 (VAWALFFAVLGVANLYVVHNF), and 149–169 (FKLFGTTGAMVVFIILQSLWL).

Belongs to the YciB family.

The protein resides in the cell inner membrane. Functionally, plays a role in cell envelope biogenesis, maintenance of cell envelope integrity and membrane homeostasis. This chain is Inner membrane-spanning protein YciB, found in Burkholderia orbicola (strain MC0-3).